The chain runs to 316 residues: Lipoyl synthase (316 aa).

Residues C60, C65, C71, C86, C90, C93, and S297 each coordinate [4Fe-4S] cluster. The Radical SAM core domain maps to W72–T286.

Belongs to the radical SAM superfamily. Lipoyl synthase family. Requires [4Fe-4S] cluster as cofactor.

It localises to the cytoplasm. The enzyme catalyses [[Fe-S] cluster scaffold protein carrying a second [4Fe-4S](2+) cluster] + N(6)-octanoyl-L-lysyl-[protein] + 2 oxidized [2Fe-2S]-[ferredoxin] + 2 S-adenosyl-L-methionine + 4 H(+) = [[Fe-S] cluster scaffold protein] + N(6)-[(R)-dihydrolipoyl]-L-lysyl-[protein] + 4 Fe(3+) + 2 hydrogen sulfide + 2 5'-deoxyadenosine + 2 L-methionine + 2 reduced [2Fe-2S]-[ferredoxin]. The protein operates within protein modification; protein lipoylation via endogenous pathway; protein N(6)-(lipoyl)lysine from octanoyl-[acyl-carrier-protein]: step 2/2. Its function is as follows. Catalyzes the radical-mediated insertion of two sulfur atoms into the C-6 and C-8 positions of the octanoyl moiety bound to the lipoyl domains of lipoate-dependent enzymes, thereby converting the octanoylated domains into lipoylated derivatives. In Nocardioides sp. (strain ATCC BAA-499 / JS614), this protein is Lipoyl synthase.